The following is a 242-amino-acid chain: Lysosomal membrane ascorbate-dependent ferrireductase CYB561A3 (242 aa).

At 1 to 4 the chain is on the cytoplasmic side; sequence MASG. A helical transmembrane segment spans residues 5–25; sequence WFYLSCMVLGSLGSMCILFTA. The region spanning 12-219 is the Cytochrome b561 domain; the sequence is VLGSLGSMCI…FGLLVLYVLL (208 aa). Residues 26–40 are Lumenal-facing; it reads YWMQYWRGGFAWDGT. The helical transmembrane segment at 41 to 61 threads the bilayer; it reads VLMFNWHPVLMVAGMVVLYGA. The heme b site is built by His-47 and Arg-67. Residues 62–81 are Cytoplasmic-facing; it reads ASLVYRLPSSWVGPRLPWKV. L-ascorbate is bound by residues Arg-76 and Lys-80. The chain crosses the membrane as a helical span at residues 82 to 102; sequence LHAALHLLAFTCTVVGLIAVF. Residues His-83, 112–115, and His-117 contribute to the heme b site; that span reads HLYS. Residues 103 to 119 are Lumenal-facing; it reads RFHNHSRIAHLYSLHSW. A helical transmembrane segment spans residues 120 to 140; the sequence is LGITTVVLFACQWFLGFAVFL. The Cytoplasmic portion of the chain corresponds to 141-154; sequence LPWASQWLRSLLKP. Arg-149 is a binding site for L-ascorbate. The chain crosses the membrane as a helical span at residues 155–175; the sequence is LHVFFGACILSLSITSVISGI. Heme b contacts are provided by His-156 and Glu-177. Topologically, residues 176-202 are lumenal; it reads NEKLFFVLKNATKPYSSLPGEAVFANS. A helical membrane pass occupies residues 203–223; sequence TGLLVVAFGLLVLYVLLASSW. Heme b is bound at residue Lys-224. The Cytoplasmic portion of the chain corresponds to 224–242; that stretch reads KRPDPGALTDRQPLLHDRE.

In terms of assembly, homodimer. Requires heme b as cofactor. N-glycosylated. Present in lung, spleen, thymus and testis. Present at low level in brain, heart, liver and kidney. Expressed in the alveolar macrophages of the lung, in the white pulp of the spleen, widespread in the thymus, and in the Sertoli cells of the testis (at protein level).

The protein resides in the late endosome membrane. Its subcellular location is the lysosome membrane. It catalyses the reaction Fe(3+)(out) + L-ascorbate(in) = monodehydro-L-ascorbate radical(in) + Fe(2+)(out) + H(+). Functionally, transmembrane reductase that uses ascorbate as an electron donor in the cytoplasm and transfers electrons across membranes to reduce iron cations Fe(3+) into Fe(2+) in the lumen of the late endosome and lysosome. Reduced iron can then be extruded from the late endosome and lysosome to the cytoplasm by divalent metal-specific transporters. It is therefore most probably involved in endosomal and lysosomal cellular iron homeostasis. This is Lysosomal membrane ascorbate-dependent ferrireductase CYB561A3 from Mus musculus (Mouse).